A 287-amino-acid polypeptide reads, in one-letter code: Very long chain fatty acid elongase 4 (287 aa).

Helical transmembrane passes span 33–53 (ILVYCCVLYILLVFMVPEHIM), 64–84 (PFVFWNIGLCLFSFCGAYSCV), and 115–135 (FWVFYFILSKIPEMIDTVFLV). The HxxHH motif signature appears at 145-149 (HWYHH). His-148 serves as the catalytic Nucleophile. A run of 4 helical transmembrane segments spans residues 150-170 (LTVAIFCWHAGHALIPSGLWF), 172-192 (TMNYCVHSIMYFYYFMCACGM), 199-219 (IAPFITMMQLLQMVAGTLIVL), and 241-261 (LGLVMYGSYFFLFAVLFGKLY).

The protein belongs to the ELO family.

The protein localises to the membrane. It carries out the reaction a very-long-chain acyl-CoA + malonyl-CoA + H(+) = a very-long-chain 3-oxoacyl-CoA + CO2 + CoA. In terms of biological role, involved in the synthesis of fatty acids. Elongates C16:0 and C18:0 fatty acids to C26:0, with C24:0 being the main product. This chain is Very long chain fatty acid elongase 4, found in Trypanosoma cruzi (strain CL Brener).